Reading from the N-terminus, the 410-residue chain is Arginine deiminase (410 aa).

The active-site Amidino-cysteine intermediate is the Cys-398.

The protein belongs to the arginine deiminase family.

It localises to the cytoplasm. The catalysed reaction is L-arginine + H2O = L-citrulline + NH4(+). It functions in the pathway amino-acid degradation; L-arginine degradation via ADI pathway; carbamoyl phosphate from L-arginine: step 1/2. In Limosilactobacillus reuteri (strain DSM 20016) (Lactobacillus reuteri), this protein is Arginine deiminase.